We begin with the raw amino-acid sequence, 360 residues long: Tryptophan--tRNA ligase, mitochondrial (360 aa).

The N-terminal 18 residues, 1-18, are a transit peptide targeting the mitochondrion; it reads MALFSVRKARECWRFIRA. Residues Gln-42 and 48 to 51 each bind ATP; that span reads HLGN. L-tryptophan is bound at residue Asp-167. Residues 179–181, Val-217, and 226–230 contribute to the ATP site; these read GED and KMSKS.

The protein belongs to the class-I aminoacyl-tRNA synthetase family.

The protein localises to the mitochondrion matrix. The protein resides in the mitochondrion. The enzyme catalyses tRNA(Trp) + L-tryptophan + ATP = L-tryptophyl-tRNA(Trp) + AMP + diphosphate + H(+). Catalyzes the attachment of tryptophan to tRNA(Trp) in a two-step reaction: tryptophan is first activated by ATP to form Trp-AMP and then transferred to the acceptor end of tRNA(Trp). The polypeptide is Tryptophan--tRNA ligase, mitochondrial (Wars2) (Mus musculus (Mouse)).